The primary structure comprises 290 residues: Glutamyl-Q tRNA(Asp) synthetase (290 aa).

Residues 9–13 (RFAPS) and Glu-45 each bind L-glutamate. The short motif at 12–22 (PSPSGSLHFGS) is the 'HIGH' region element. Residues Cys-101, Cys-103, Tyr-115, and Cys-119 each contribute to the Zn(2+) site. L-glutamate contacts are provided by Tyr-170 and Arg-188. Residues 226 to 230 (KLSKQ) carry the 'KMSKS' region motif. Residue Lys-229 coordinates ATP.

It belongs to the class-I aminoacyl-tRNA synthetase family. GluQ subfamily. The cofactor is Zn(2+).

Its function is as follows. Catalyzes the tRNA-independent activation of glutamate in presence of ATP and the subsequent transfer of glutamate onto a tRNA(Asp). Glutamate is transferred on the 2-amino-5-(4,5-dihydroxy-2-cyclopenten-1-yl) moiety of the queuosine in the wobble position of the QUC anticodon. In Shewanella amazonensis (strain ATCC BAA-1098 / SB2B), this protein is Glutamyl-Q tRNA(Asp) synthetase.